Reading from the N-terminus, the 140-residue chain is Nucleoside triphosphatase NudI (140 aa).

One can recognise a Nudix hydrolase domain in the interval 1–140; the sequence is MRHRTIVCPL…RVTLSLKGLL (140 aa). The Nudix box motif lies at 38–58; sequence GVEPGERIEEALRREIREELG.

Belongs to the Nudix hydrolase family. NudI subfamily. In terms of assembly, monomer. Mg(2+) serves as cofactor.

It catalyses the reaction a ribonucleoside 5'-triphosphate + H2O = a ribonucleoside 5'-phosphate + diphosphate + H(+). The catalysed reaction is a 2'-deoxyribonucleoside 5'-triphosphate + H2O = a 2'-deoxyribonucleoside 5'-phosphate + diphosphate + H(+). The enzyme catalyses dUTP + H2O = dUMP + diphosphate + H(+). It carries out the reaction dTTP + H2O = dTMP + diphosphate + H(+). It catalyses the reaction dCTP + H2O = dCMP + diphosphate + H(+). Catalyzes the hydrolysis of nucleoside triphosphates, with a preference for pyrimidine deoxynucleoside triphosphates (dUTP, dTTP and dCTP). This is Nucleoside triphosphatase NudI from Klebsiella pneumoniae subsp. pneumoniae (strain ATCC 700721 / MGH 78578).